Consider the following 80-residue polypeptide: Acyl carrier protein (80 aa).

The Carrier domain occupies 1–79 (MTEEEIFNKI…EAVEYIKSHQ (79 aa)). Ser-39 is subject to O-(pantetheine 4'-phosphoryl)serine.

It belongs to the acyl carrier protein (ACP) family. Post-translationally, 4'-phosphopantetheine is transferred from CoA to a specific serine of apo-ACP by AcpS. This modification is essential for activity because fatty acids are bound in thioester linkage to the sulfhydryl of the prosthetic group.

It is found in the cytoplasm. It functions in the pathway lipid metabolism; fatty acid biosynthesis. In terms of biological role, carrier of the growing fatty acid chain in fatty acid biosynthesis. This chain is Acyl carrier protein, found in Lactobacillus johnsonii (strain CNCM I-12250 / La1 / NCC 533).